A 354-amino-acid polypeptide reads, in one-letter code: Probable dual-specificity RNA methyltransferase RlmN (354 aa).

Catalysis depends on Glu-94, which acts as the Proton acceptor. Residues 103–332 (GRRRNTACLS…QEAGLEAAIR (230 aa)) form the Radical SAM core domain. An intrachain disulfide couples Cys-110 to Cys-343. [4Fe-4S] cluster-binding residues include Cys-117, Cys-121, and Cys-124. Residues 169–170 (GE), Ser-201, 224–226 (SLH), and Asn-300 each bind S-adenosyl-L-methionine. Residue Cys-343 is the S-methylcysteine intermediate of the active site.

The protein belongs to the radical SAM superfamily. RlmN family. [4Fe-4S] cluster serves as cofactor.

The protein resides in the cytoplasm. The enzyme catalyses adenosine(2503) in 23S rRNA + 2 reduced [2Fe-2S]-[ferredoxin] + 2 S-adenosyl-L-methionine = 2-methyladenosine(2503) in 23S rRNA + 5'-deoxyadenosine + L-methionine + 2 oxidized [2Fe-2S]-[ferredoxin] + S-adenosyl-L-homocysteine. The catalysed reaction is adenosine(37) in tRNA + 2 reduced [2Fe-2S]-[ferredoxin] + 2 S-adenosyl-L-methionine = 2-methyladenosine(37) in tRNA + 5'-deoxyadenosine + L-methionine + 2 oxidized [2Fe-2S]-[ferredoxin] + S-adenosyl-L-homocysteine. Specifically methylates position 2 of adenine 2503 in 23S rRNA and position 2 of adenine 37 in tRNAs. The chain is Probable dual-specificity RNA methyltransferase RlmN from Moorella thermoacetica (strain ATCC 39073 / JCM 9320).